The primary structure comprises 184 residues: Ras-related protein Rap1 (184 aa).

10-17 (GSGGVGKS) contacts GTP. Residues 32–40 (YDPTIEDSY) carry the Effector region motif. GTP is bound by residues 57-61 (DTAGT) and 116-119 (NKCD). A Cysteine methyl ester modification is found at C181. C181 carries the S-geranylgeranyl cysteine lipid modification. The propeptide at 182–184 (VLL) is removed in mature form.

Belongs to the small GTPase superfamily. Ras family.

It localises to the cell membrane. The catalysed reaction is GTP + H2O = GDP + phosphate + H(+). Its activity is regulated as follows. Alternates between an inactive form bound to GDP and an active form bound to GTP. Activated by a guanine nucleotide-exchange factor (GEF) and inactivated by a GTPase-activating protein (GAP). Ras proteins bind GDP/GTP and possess intrinsic GTPase activity. Plays a role in photoreceptor cell determination. This is Ras-related protein Rap1 from Drosophila melanogaster (Fruit fly).